The chain runs to 270 residues: 5-deoxy-glucuronate isomerase (270 aa).

This sequence belongs to the isomerase IolB family.

It catalyses the reaction 5-deoxy-D-glucuronate = 5-dehydro-2-deoxy-D-gluconate. It functions in the pathway polyol metabolism; myo-inositol degradation into acetyl-CoA; acetyl-CoA from myo-inositol: step 4/7. Its function is as follows. Involved in the isomerization of 5-deoxy-glucuronate (5DG) to 5-dehydro-2-deoxy-D-gluconate (DKG or 2-deoxy-5-keto-D-gluconate). This chain is 5-deoxy-glucuronate isomerase, found in Halalkalibacterium halodurans (strain ATCC BAA-125 / DSM 18197 / FERM 7344 / JCM 9153 / C-125) (Bacillus halodurans).